We begin with the raw amino-acid sequence, 249 residues long: 23S rRNA (guanosine-2'-O-)-methyltransferase RlmB (249 aa).

S-adenosyl-L-methionine is bound by residues G200, I220, and L229.

This sequence belongs to the class IV-like SAM-binding methyltransferase superfamily. RNA methyltransferase TrmH family. RlmB subfamily.

The protein resides in the cytoplasm. It catalyses the reaction guanosine(2251) in 23S rRNA + S-adenosyl-L-methionine = 2'-O-methylguanosine(2251) in 23S rRNA + S-adenosyl-L-homocysteine + H(+). Its function is as follows. Specifically methylates the ribose of guanosine 2251 in 23S rRNA. The protein is 23S rRNA (guanosine-2'-O-)-methyltransferase RlmB of Xanthomonas axonopodis pv. citri (strain 306).